The following is a 205-amino-acid chain: Methylthioribulose-1-phosphate dehydratase (205 aa).

Zn(2+) is bound by residues His96 and His98.

It belongs to the aldolase class II family. MtnB subfamily. It depends on Zn(2+) as a cofactor.

The catalysed reaction is 5-(methylsulfanyl)-D-ribulose 1-phosphate = 5-methylsulfanyl-2,3-dioxopentyl phosphate + H2O. The protein operates within amino-acid biosynthesis; L-methionine biosynthesis via salvage pathway; L-methionine from S-methyl-5-thio-alpha-D-ribose 1-phosphate: step 2/6. In terms of biological role, catalyzes the dehydration of methylthioribulose-1-phosphate (MTRu-1-P) into 2,3-diketo-5-methylthiopentyl-1-phosphate (DK-MTP-1-P). This chain is Methylthioribulose-1-phosphate dehydratase, found in Pseudomonas aeruginosa (strain ATCC 15692 / DSM 22644 / CIP 104116 / JCM 14847 / LMG 12228 / 1C / PRS 101 / PAO1).